Reading from the N-terminus, the 447-residue chain is Serine/threonine-protein phosphatase 2A 55 kDa regulatory subunit B gamma isoform (447 aa).

WD repeat units lie at residues 22-61 (TPAD…KNAP), 87-128 (EIEE…KRPE), 171-209 (GHTY…RSFN), 220-260 (DLTE…LCDK), 279-317 (EIIS…RPIE), 334-375 (ENDC…DVTL), and 410-446 (DFTK…NSDM).

Belongs to the phosphatase 2A regulatory subunit B family. As to quaternary structure, PP2A consists of a common heterodimeric core enzyme, composed of a 36 kDa catalytic subunit (subunit C) and a 65 kDa constant regulatory subunit (PR65 or subunit A), that associates with a variety of regulatory subunits. Proteins that associate with the core dimer include three families of regulatory subunits B (the R2/B/PR55/B55, R3/B''/PR72/PR130/PR59 and R5/B'/B56 families), the 48 kDa variable regulatory subunit, viral proteins, and cell signaling molecules. Interacts with IER5.

In terms of biological role, the B regulatory subunit might modulate substrate selectivity and catalytic activity, and might also direct the localization of the catalytic enzyme to a particular subcellular compartment. The protein is Serine/threonine-protein phosphatase 2A 55 kDa regulatory subunit B gamma isoform (PPP2R2C) of Macaca fascicularis (Crab-eating macaque).